A 266-amino-acid polypeptide reads, in one-letter code: tRNA pseudouridine synthase A (266 aa).

Asp57 functions as the Nucleophile in the catalytic mechanism. A substrate-binding site is contributed by Tyr115.

The protein belongs to the tRNA pseudouridine synthase TruA family. In terms of assembly, homodimer.

The enzyme catalyses uridine(38/39/40) in tRNA = pseudouridine(38/39/40) in tRNA. Its function is as follows. Formation of pseudouridine at positions 38, 39 and 40 in the anticodon stem and loop of transfer RNAs. This chain is tRNA pseudouridine synthase A, found in Buchnera aphidicola subsp. Acyrthosiphon pisum (strain Tuc7).